The primary structure comprises 1456 residues: Retrovirus-related Pol polyprotein from transposon RE2 (1456 aa).

The interval 205–252 is disordered; the sequence is NVVTHRNTNTNRNQNNRGDNRNYNNNNNRSNSWQPSSSGSRSDNRQPK. The segment covering 210 to 245 has biased composition (low complexity); it reads RNTNTNRNQNNRGDNRNYNNNNNRSNSWQPSSSGSR. Residues 257–273 form a CCHC-type zinc finger; it reads RCQICSVQGHSAKRCPQ. Over residues 276 to 291 the composition is skewed to low complexity; the sequence is QFQSTTNQQQSTSPFT. Residues 276–295 are disordered; sequence QFQSTTNQQQSTSPFTPWQP. Asp-313 (for protease activity) is an active-site residue. The Integrase catalytic domain occupies 498-661; it reads TSSKPLEYIY…SPFQKLFGQP (164 aa). Mg(2+)-binding residues include Asp-509 and Asp-571. Positions 738-754 are enriched in polar residues; sequence STSQEQRSDSAPNWPSH. Residues 738–896 form a disordered region; sequence STSQEQRSDS…PPLPPVLPAP (159 aa). Low complexity predominate over residues 793 to 814; the sequence is SSSNLPSSSISSPSSSEPTAPS. Residues 816-827 are compositionally biased toward polar residues; the sequence is NGPQPTAQPHQT. 2 stretches are compositionally biased toward low complexity: residues 828 to 841 and 849 to 886; these read QNSN…NNPN and SPNQ…STST. The span at 887–896 shows a compositional bias: pro residues; that stretch reads PPLPPVLPAP. Positions 965–1208 constitute a Reverse transcriptase Ty1/copia-type domain; it reads NHTWDLVPPP…LTAKPVATPM (244 aa).

It carries out the reaction DNA(n) + a 2'-deoxyribonucleoside 5'-triphosphate = DNA(n+1) + diphosphate. The polypeptide is Retrovirus-related Pol polyprotein from transposon RE2 (RE2) (Arabidopsis thaliana (Mouse-ear cress)).